Reading from the N-terminus, the 79-residue chain is uncharacterized protein (79 aa).

The segment at 20–52 (TERGAGLSPAAPPDPSPAIAPTMAEGGVPSPGP) is disordered.

This is an uncharacterized protein from Homo sapiens (Human).